Reading from the N-terminus, the 195-residue chain is uncharacterized protein (195 aa).

Polar residues predominate over residues 1-11 (MDYIVSPTSSE). Residues 1–118 (MDYIVSPTSS…LDTEGGFVLS (118 aa)) are disordered. Residues 35-46 (SPEDITDSDEQN) show a composition bias toward acidic residues. The span at 47–63 (DTTTTTSEMSSTSSVPS) shows a compositional bias: low complexity. A compositionally biased stretch (basic and acidic residues) spans 82-93 (SDSKLIFDSDNK). The segment covering 94 to 110 (DQDDEDDEDDEELEGLD) has biased composition (acidic residues).

This is an uncharacterized protein from Acanthamoeba polyphaga mimivirus (APMV).